We begin with the raw amino-acid sequence, 628 residues long: Glutamine--fructose-6-phosphate aminotransferase [isomerizing] (628 aa).

The Nucleophile; for GATase activity role is filled by cysteine 2. Residues 2–229 enclose the Glutamine amidotransferase type-2 domain; sequence CGIVGYVGHR…QDQAVVLTAD (228 aa). The segment at 61-94 is disordered; it reads ETDSNDGDGLGGSTGLGHTRWATHGRPTDRNAHP. SIS domains follow at residues 301–440 and 473–618; these read SDQE…ARGT and LAER…VDKP. Lysine 623 acts as the For Fru-6P isomerization activity in catalysis.

Homodimer.

It localises to the cytoplasm. The enzyme catalyses D-fructose 6-phosphate + L-glutamine = D-glucosamine 6-phosphate + L-glutamate. Its function is as follows. Catalyzes the first step in hexosamine metabolism, converting fructose-6P into glucosamine-6P using glutamine as a nitrogen source. In Mycolicibacterium smegmatis (strain ATCC 700084 / mc(2)155) (Mycobacterium smegmatis), this protein is Glutamine--fructose-6-phosphate aminotransferase [isomerizing].